The following is a 249-amino-acid chain: Hydroxyacylglutathione hydrolase (249 aa).

Residues H54, H56, D58, H59, H113, D138, and H176 each coordinate Zn(2+).

The protein belongs to the metallo-beta-lactamase superfamily. Glyoxalase II family. As to quaternary structure, monomer. Requires Zn(2+) as cofactor.

The enzyme catalyses an S-(2-hydroxyacyl)glutathione + H2O = a 2-hydroxy carboxylate + glutathione + H(+). It functions in the pathway secondary metabolite metabolism; methylglyoxal degradation; (R)-lactate from methylglyoxal: step 2/2. Functionally, thiolesterase that catalyzes the hydrolysis of S-D-lactoyl-glutathione to form glutathione and D-lactic acid. This chain is Hydroxyacylglutathione hydrolase, found in Parasynechococcus marenigrum (strain WH8102).